The chain runs to 100 residues: Small ribosomal subunit protein uS14c (100 aa).

It belongs to the universal ribosomal protein uS14 family. Part of the 30S ribosomal subunit.

It is found in the plastid. It localises to the chloroplast. Functionally, binds 16S rRNA, required for the assembly of 30S particles. The chain is Small ribosomal subunit protein uS14c from Cyanidium caldarium (Red alga).